Reading from the N-terminus, the 555-residue chain is Cinnamate beta-D-glucosyltransferase (555 aa).

The Proton acceptor role is filled by His-19. His-19 contacts an anthocyanidin. UDP-alpha-D-glucose contacts are provided by Gln-344, His-359, Trp-362, Asn-363, Ser-364, and Glu-367. Gly-382 serves as a coordination point for an anthocyanidin. Asp-383 and Gln-384 together coordinate UDP-alpha-D-glucose.

The protein belongs to the UDP-glycosyltransferase family. Highest expression detected in fruit, with lower levels detected in flower and petiole. Barely detectable in leaf and root.

The enzyme catalyses (E)-cinnamate + UDP-alpha-D-glucose = 1-O-(trans-cinnamoyl)-beta-D-glucose + UDP. Its function is as follows. Broad spectrum multifunctional glucosyltransferase. Catalyzes the formation of cinnamic acid and p-coumaric acid glucose esters during fruit ripening. Accepted substrates range from derivatives of cinnamic acid and benzoic acid to heterocyclic and aliphatic compounds, resulting in the formation of O- and S-glucose esters and O-glucosides. May also be involved in detoxification of xenobiotics. The protein is Cinnamate beta-D-glucosyltransferase of Fragaria ananassa (Strawberry).